The chain runs to 329 residues: GTPase Obg (329 aa).

Residues 1–159 (MQFIDQAIID…WSLQLELKLL (159 aa)) form the Obg domain. In terms of domain architecture, OBG-type G spans 160-328 (AEVGIIGLPN…LLSSIWYELG (169 aa)). ATP contacts are provided by residues 166–173 (GLPNAGKS), 191–195 (FTTLI), 213–216 (DIPG), 280–283 (NKKE), and 309–311 (SAV). The Mg(2+) site is built by serine 173 and threonine 193.

It belongs to the TRAFAC class OBG-HflX-like GTPase superfamily. OBG GTPase family. Monomer. The cofactor is Mg(2+).

The protein resides in the cytoplasm. In terms of biological role, an essential GTPase which binds GTP, GDP and possibly (p)ppGpp with moderate affinity, with high nucleotide exchange rates and a fairly low GTP hydrolysis rate. Plays a role in control of the cell cycle, stress response, ribosome biogenesis and in those bacteria that undergo differentiation, in morphogenesis control. This Prochlorococcus marinus (strain NATL1A) protein is GTPase Obg.